The sequence spans 109 residues: ATP-dependent Clp protease adapter protein ClpS (109 aa).

Residues 1–25 are disordered; sequence MSERKEGDSGAGVRSAVITQTKPKT.

The protein belongs to the ClpS family. As to quaternary structure, binds to the N-terminal domain of the chaperone ClpA.

Its function is as follows. Involved in the modulation of the specificity of the ClpAP-mediated ATP-dependent protein degradation. The chain is ATP-dependent Clp protease adapter protein ClpS from Phenylobacterium zucineum (strain HLK1).